The chain runs to 192 residues: Holliday junction branch migration complex subunit RuvA (192 aa).

The tract at residues 1 to 64 (MLGRLTGLLA…EDAQVLFGFL (64 aa)) is domain I. Positions 65–139 (TAPERETFRM…GKLGADLGPA (75 aa)) are domain II. The flexible linker stretch occupies residues 139–143 (AIGGK). The segment at 144–192 (PASDAQADILQALIALGYSEREAQAAVKALPAEVGVSDGIKLALKALAR) is domain III.

It belongs to the RuvA family. In terms of assembly, homotetramer. Forms an RuvA(8)-RuvB(12)-Holliday junction (HJ) complex. HJ DNA is sandwiched between 2 RuvA tetramers; dsDNA enters through RuvA and exits via RuvB. An RuvB hexamer assembles on each DNA strand where it exits the tetramer. Each RuvB hexamer is contacted by two RuvA subunits (via domain III) on 2 adjacent RuvB subunits; this complex drives branch migration. In the full resolvosome a probable DNA-RuvA(4)-RuvB(12)-RuvC(2) complex forms which resolves the HJ.

It is found in the cytoplasm. In terms of biological role, the RuvA-RuvB-RuvC complex processes Holliday junction (HJ) DNA during genetic recombination and DNA repair, while the RuvA-RuvB complex plays an important role in the rescue of blocked DNA replication forks via replication fork reversal (RFR). RuvA specifically binds to HJ cruciform DNA, conferring on it an open structure. The RuvB hexamer acts as an ATP-dependent pump, pulling dsDNA into and through the RuvAB complex. HJ branch migration allows RuvC to scan DNA until it finds its consensus sequence, where it cleaves and resolves the cruciform DNA. This chain is Holliday junction branch migration complex subunit RuvA, found in Methylibium petroleiphilum (strain ATCC BAA-1232 / LMG 22953 / PM1).